The sequence spans 161 residues: MKFFAVLALCIVGAIASPLTADEASLVQSSWKAVSHNEVEILAAVFAAYPDIQNKFSQFAGKDLASIKDTGAFATHATRIVSFLSEVIALSGNESNASAVNSLVSKLGDDHKARGVSAAQFGEFRTALVAYLQANVSWGDNVAAAWNKALDNTFAIVVPRL.

An N-terminal signal peptide occupies residues 1–16 (MKFFAVLALCIVGAIA). Positions 18-161 (PLTADEASLV…NTFAIVVPRL (144 aa)) constitute a Globin domain. The heme b site is built by His76 and His111.

The protein belongs to the globin family. Homodimer.

This chain is Globin CTT-VIIB-10 (CTT-7B10), found in Chironomus thummi thummi (Midge).